The primary structure comprises 205 residues: Arginine exporter protein ArgO (205 aa).

6 helical membrane-spanning segments follow: residues 1 to 21 (MLAVYLHGFILSAAMILPLGP), 42 to 62 (LCALSDIILICAGIFGGSALL), 67 to 87 (LLLALVTWGGVAFLMWYGWGA), 111 to 131 (ILVTLLAVTWLNPHVYLDTFV), 147 to 167 (WFALGAVTASIVWFFALALLA), and 185 to 205 (LFVGGVMGFIAFQLARQGFGL).

The protein belongs to the LysE/ArgO transporter (TC 2.A.75) family.

The protein localises to the cell inner membrane. The catalysed reaction is L-arginine(in) = L-arginine(out). Its function is as follows. Involved in the export of arginine. Important to control the intracellular level of arginine and the correct balance between arginine and lysine. This chain is Arginine exporter protein ArgO, found in Yersinia pseudotuberculosis serotype IB (strain PB1/+).